A 130-amino-acid chain; its full sequence is Protein ApaG (130 aa).

The region spanning 3–127 (RALTKDIEVV…FSLDSPGLLR (125 aa)) is the ApaG domain.

In Rhizobium leguminosarum bv. trifolii (strain WSM2304), this protein is Protein ApaG.